Reading from the N-terminus, the 200-residue chain is Probable GTP-binding protein EngB (200 aa).

The 173-residue stretch at 22–194 (TLPEVAFVGR…WKEVLRLTLA (173 aa)) folds into the EngB-type G domain. Residues 30 to 37 (GRSNVGKS), 57 to 61 (GRTQL), 75 to 78 (DLPG), 142 to 145 (TKCD), and 173 to 175 (FSA) each bind GTP. 2 residues coordinate Mg(2+): serine 37 and threonine 59.

It belongs to the TRAFAC class TrmE-Era-EngA-EngB-Septin-like GTPase superfamily. EngB GTPase family. The cofactor is Mg(2+).

Functionally, necessary for normal cell division and for the maintenance of normal septation. The sequence is that of Probable GTP-binding protein EngB from Pelobacter propionicus (strain DSM 2379 / NBRC 103807 / OttBd1).